A 520-amino-acid polypeptide reads, in one-letter code: Biotinidase (520 aa).

Positions methionine 1 to glycine 21 are cleaved as a signal peptide. Residues asparagine 49–proline 333 form the CN hydrolase domain. The active-site Proton acceptor is the glutamate 89. 3 N-linked (GlcNAc...) asparagine glycosylation sites follow: asparagine 96, asparagine 127, and asparagine 180. Lysine 189 serves as the catalytic Proton donor. Cysteine 222 functions as the Nucleophile in the catalytic mechanism. N-linked (GlcNAc...) asparagine glycosylation is found at asparagine 326, asparagine 379, and asparagine 466.

This sequence belongs to the carbon-nitrogen hydrolase superfamily. BTD/VNN family.

The protein resides in the secreted. Its subcellular location is the extracellular space. It catalyses the reaction biocytin + H2O = biotin + L-lysine. It carries out the reaction biotin amide + H2O = biotin + NH4(+). Catalytic release of biotin from biocytin, the product of biotin-dependent carboxylases degradation. This Mus musculus (Mouse) protein is Biotinidase (Btd).